Consider the following 78-residue polypeptide: Molt-inhibiting hormone (78 aa).

Cystine bridges form between Cys7/Cys44, Cys24/Cys40, and Cys27/Cys53.

It localises to the secreted. In terms of biological role, inhibits Y-organs where molting hormone (ecdysteroid) is secreted. A molting cycle is initiated when MIH secretion diminishes or stops. Also has significant hyperglycemic hormone (CHH) activity. This is Molt-inhibiting hormone from Cancer pagurus (Rock crab).